Reading from the N-terminus, the 542-residue chain is Organic anion transporter 3 (542 aa).

At 1–9 (MTFSEILDR) the chain is on the cytoplasmic side. Residue S4 is modified to Phosphoserine. Residues 10-30 (VGSMGHFQFLHVAILGLPILN) traverse the membrane as a helical segment. Residues 31 to 123 (MANHNLLQIF…LVCNSNKLKE (93 aa)) are Extracellular-facing. Residues N86 and N102 are each glycosylated (N-linked (GlcNAc...) asparagine). A helical transmembrane segment spans residues 124–144 (MAQSIFMAGILIGGLVLGDLS). Residues 145 to 154 (DRFGRRPILT) lie on the Cytoplasmic side of the membrane. A helical membrane pass occupies residues 155-175 (CSYLLLAASGSGAAFSPTFPI). A topological domain (extracellular) is located at residue Y176. The chain crosses the membrane as a helical span at residues 177-197 (MVFRFLCGFGISGITLSTVIL). Over 198–212 (NVEWVPTRMRAIMST) the chain is Cytoplasmic. The chain crosses the membrane as a helical span at residues 213-233 (ALGYCYTFGQFILPGLAYAIP). Residues 234 to 236 (QWR) are Extracellular-facing. Residues 237 to 257 (WLQLTVSIPFFVFFLSSWWTP) traverse the membrane as a helical segment. The Cytoplasmic portion of the chain corresponds to 258–327 (ESIRWLVLSG…FRIPMLRRMT (70 aa)). The chain crosses the membrane as a helical span at residues 328–348 (FCLSLAWFATGFAYYSLAMGV). The Extracellular segment spans residues 349–354 (EEFGVN). A helical membrane pass occupies residues 355–375 (LYILQIIFGGVDVPAKFITIL). Residues 376 to 386 (SLSYLGRHTTQ) lie on the Cytoplasmic side of the membrane. The helical transmembrane segment at 387–407 (AAALLLAGGAILALTFVPLDL) threads the bilayer. The Extracellular portion of the chain corresponds to 408 to 411 (QTVR). The helical transmembrane segment at 412–432 (TVLAVFGKGCLSSSFSCLFLY) threads the bilayer. Topologically, residues 433–471 (TSELYPTVIRQTGMGVSNLWTRVGSMVSPLVKITGEVQP) are cytoplasmic. The chain crosses the membrane as a helical span at residues 472-492 (FIPNIIYGITALLGGSAALFL). Topologically, residues 493 to 542 (PETLNQPLPETIEDLENWSLRAKKPKQEPEVEKASQRIPLQPHGPGLGSS) are extracellular. A disordered region spans residues 515 to 542 (KKPKQEPEVEKASQRIPLQPHGPGLGSS). Positions 517-527 (PKQEPEVEKAS) are enriched in basic and acidic residues.

The protein belongs to the major facilitator (TC 2.A.1) superfamily. Organic cation transporter (TC 2.A.1.19) family. Strongly expressed in kidney. Weaker expression in brain and skeletal muscle. Expressed in adrenal glands.

It is found in the basolateral cell membrane. The catalysed reaction is estrone 3-sulfate(out) + glutarate(in) = estrone 3-sulfate(in) + glutarate(out). It catalyses the reaction estrone 3-sulfate(in) + 2-oxoglutarate(out) = estrone 3-sulfate(out) + 2-oxoglutarate(in). It carries out the reaction glutarate(in) + 2-oxoglutarate(out) = glutarate(out) + 2-oxoglutarate(in). The enzyme catalyses urate(in) + 2-oxoglutarate(out) = urate(out) + 2-oxoglutarate(in). The catalysed reaction is taurocholate(out) + glutarate(in) = taurocholate(in) + glutarate(out). It catalyses the reaction dehydroepiandrosterone 3-sulfate(out) + glutarate(in) = dehydroepiandrosterone 3-sulfate(in) + glutarate(out). It carries out the reaction prostaglandin F2alpha(out) + glutarate(in) = prostaglandin F2alpha(in) + glutarate(out). The enzyme catalyses prostaglandin F2alpha(out) + 2-oxoglutarate(in) = prostaglandin F2alpha(in) + 2-oxoglutarate(out). The catalysed reaction is (R)-carnitine(out) + 2-oxoglutarate(in) = (R)-carnitine(in) + 2-oxoglutarate(out). It catalyses the reaction glutarate(in) + (R)-carnitine(out) = glutarate(out) + (R)-carnitine(in). It carries out the reaction prostaglandin E2(out) + 2-oxoglutarate(in) = prostaglandin E2(in) + 2-oxoglutarate(out). The enzyme catalyses prostaglandin E2(out) + glutarate(in) = prostaglandin E2(in) + glutarate(out). The catalysed reaction is urate(in) + glutarate(out) = urate(out) + glutarate(in). It catalyses the reaction taurocholate(out) + 2-oxoglutarate(in) = taurocholate(in) + 2-oxoglutarate(out). It carries out the reaction dehydroepiandrosterone 3-sulfate(out) + 2-oxoglutarate(in) = dehydroepiandrosterone 3-sulfate(in) + 2-oxoglutarate(out). The enzyme catalyses kynurenate(out) + a dicarboxylate(in) = kynurenate(in) + a dicarboxylate(out). The catalysed reaction is (indol-3-yl)acetate(out) + a dicarboxylate(in) = (indol-3-yl)acetate(in) + a dicarboxylate(out). It catalyses the reaction indoxyl sulfate(out) + a dicarboxylate(in) = indoxyl sulfate(in) + a dicarboxylate(out). It carries out the reaction N-benzoylglycine(out) + a dicarboxylate(in) = N-benzoylglycine(in) + a dicarboxylate(out). The enzyme catalyses 3-carboxy-4-methyl-5-propyl-2-furanpropanoate(out) + a dicarboxylate(in) = 3-carboxy-4-methyl-5-propyl-2-furanpropanoate(in) + a dicarboxylate(out). The catalysed reaction is (6R)-L-erythro-5,6,7,8-tetrahydrobiopterin(out) + a dicarboxylate(in) = (6R)-L-erythro-5,6,7,8-tetrahydrobiopterin(in) + a dicarboxylate(out). It catalyses the reaction L-erythro-7,8-dihydrobiopterin(out) + a dicarboxylate(in) = L-erythro-7,8-dihydrobiopterin(in) + a dicarboxylate(out). It carries out the reaction L-sepiapterin(out) + a dicarboxylate(in) = L-sepiapterin(in) + a dicarboxylate(out). Functionally, functions as an organic anion/dicarboxylate exchanger that couples organic anion uptake indirectly to the sodium gradient. Transports organic anions such as estrone 3-sulfate (E1S) and urate in exchange for dicarboxylates such as glutarate or ketoglutarate (2-oxoglutarate). Plays an important role in the excretion of endogenous and exogenous organic anions, especially from the kidney and the brain. E1S transport is pH- and chloride-dependent and may also involve E1S/cGMP exchange. Responsible for the transport of prostaglandin E2 (PGE2) and prostaglandin F2(alpha) (PGF2(alpha)) in the basolateral side of the renal tubule. Involved in the transport of neuroactive tryptophan metabolites kynurenate and xanthurenate. Functions as a biopterin transporters involved in the uptake and the secretion of coenzymes tetrahydrobiopterin (BH4), dihydrobiopterin (BH2) and sepiapterin to urine, thereby determining baseline levels of blood biopterins. May be involved in the basolateral transport of steviol, a metabolite of the popular sugar substitute stevioside. May participate in the detoxification/ renal excretion of drugs and xenobiotics, such as the histamine H(2)-receptor antagonists fexofenadine and cimetidine, the antibiotic benzylpenicillin (PCG), the anionic herbicide 2,4-dichloro-phenoxyacetate (2,4-D), the diagnostic agent p-aminohippurate (PAH), the antiviral acyclovir (ACV), and the mycotoxin ochratoxin (OTA), by transporting these exogenous organic anions across the cell membrane in exchange for dicarboxylates such as 2-oxoglutarate. Contributes to the renal uptake of potent uremic toxins (indoxyl sulfate (IS), indole acetate (IA), hippurate/N-benzoylglycine (HA) and 3-carboxy-4-methyl-5-propyl-2-furanpropionate (CMPF)), pravastatin, PCG, E1S and dehydroepiandrosterone sulfate (DHEAS), and is partly involved in the renal uptake of temocaprilat (an angiotensin-converting enzyme (ACE) inhibitor). May contribute to the release of cortisol in the adrenals. Involved in one of the detoxification systems on the choroid plexus (CP), removes substrates such as E1S or taurocholate (TC), PCG, 2,4-D and PAH, from the cerebrospinal fluid (CSF) to the blood for eventual excretion in urine and bile. Also contributes to the uptake of several other organic compounds such as the prostanoids prostaglandin E(2) and prostaglandin F(2-alpha), L-carnitine, and the therapeutic drugs allopurinol, 6-mercaptopurine (6-MP) and 5-fluorouracil (5-FU). Mediates the transport of PAH, PCG, and the statins pravastatin and pitavastatin, from the cerebrum into the blood circulation across the blood-brain barrier (BBB). In summary, plays a role in the efflux of drugs and xenobiotics, helping reduce their undesired toxicological effects on the body. The sequence is that of Organic anion transporter 3 from Homo sapiens (Human).